A 236-amino-acid polypeptide reads, in one-letter code: Proteasome subunit beta type-1 (236 aa).

This sequence belongs to the peptidase T1B family. The 26S proteasome consists of a 20S proteasome core and two 19S regulatory subunits. The 20S proteasome core is composed of 28 subunits that are arranged in four stacked rings, resulting in a barrel-shaped structure. The two end rings are each formed by seven alpha subunits, and the two central rings are each formed by seven beta subunits. The catalytic chamber with the active sites is on the inside of the barrel.

The protein resides in the cytoplasm. It localises to the nucleus. Non-catalytic component of the proteasome, a multicatalytic proteinase complex which is characterized by its ability to cleave peptides with Arg, Phe, Tyr, Leu, and Glu adjacent to the leaving group at neutral or slightly basic pH. The proteasome has an ATP-dependent proteolytic activity. The polypeptide is Proteasome subunit beta type-1 (psmB1) (Dictyostelium discoideum (Social amoeba)).